Consider the following 768-residue polypeptide: Protein transport protein Sec23A (768 aa).

N-acetylthreonine is present on Thr-2. Zn(2+)-binding residues include Cys-61, Cys-66, Cys-85, and Cys-88. Thr-308 carries the post-translational modification Phosphothreonine. The Gelsolin-like repeat unit spans residues 632–718 (PEPVLLDSSS…EHGGSQARFL (87 aa)).

This sequence belongs to the SEC23/SEC24 family. SEC23 subfamily. In terms of assembly, COPII is composed of at least five proteins: the Sec23/24 complex, the Sec13/31 complex and Sar1. Interacts with SEC23IP. Interacts with HTR4. Interacts with SEC16A. Interacts with SLC6A4. Interacts (as part of the Sec23/24 complex) with SEC22B; recruits SEC22B into COPII-coated vesicles and allows the transport of this cargo from the endoplasmic reticulum to the Golgi. Interacts (via Gelsolin-like repeat) with MIA2 and MIA3; specifically involved in the transport of large cargos like the collagen COL7A1. Interacts with DDHD1. Interacts with TMEM39A. Interacts with SACM1L; this interaction is reduced in the absence of TMEM39A. Interacts with kinase FAM20C; transport of FAM20C from the endoplasmic reticulum to the Golgi is likely to be mediated by COPII vesicles.

It localises to the cytoplasmic vesicle. The protein localises to the COPII-coated vesicle membrane. Its subcellular location is the endoplasmic reticulum membrane. It is found in the cytoplasm. The protein resides in the cytosol. In terms of biological role, component of the coat protein complex II (COPII) which promotes the formation of transport vesicles from the endoplasmic reticulum (ER). The coat has two main functions, the physical deformation of the endoplasmic reticulum membrane into vesicles and the selection of cargo molecules for their transport to the Golgi complex. Required for the translocation of insulin-induced glucose transporter SLC2A4/GLUT4 to the cell membrane. This is Protein transport protein Sec23A from Bos taurus (Bovine).